Reading from the N-terminus, the 587-residue chain is MQKPPLLLRRPLPPKFTKLSLHEKKTHTAKTGKIESLHVAFTEDETTSIKMDRTRFPDVLRNQSLTPINIQNIFLDHCVQERVTAISSPQKSTKHVREQIPDTATGSIFFPHCNSASTRIFGKQTNKMESSRKFKTMKDVYTEKRLENILILSSKFSKPKSTPGSVIAQKLEKMHPKHQPLPESPGYTYQHISRDLSATVPSPPPMTVSMKPEGQWPEHFKSTATLTLRVTEFPGFVSLPTPVLPRKPHRQSVIETLVTENGNIESVPKQIPPRPPEGLTKTEKIESEIHVVRGEGFKTVAATRYETITAMTNLAIVNCQVYGRNALNLKGFFILNCPDLTPLAFQLIYLNLSFNDLHYFPTEILCLKNLQILKLRNNPIKEIPSEIQQLEFLRIFTIAFNLITVLPIGLFSLSYLEELDVSYNELTFIPNEIQKLRSLEKLTVDGNELSFFPHGILKLNLTKIQFENNFTHPCFWRDNYLNNPQQLTQIISLFIVQNKLHKFYDKIPVEVQKLLKCTSRCEWCHGPKFGEGFRVIRSCDIFGASQLPVMFYVCSPSCYRRIKESSFVLDGSPSRRIALDVELSKEL.

7 LRR repeats span residues 251-274 (QSVIETLVTENGNIESVPKQIPPR), 344-367 (AFQLIYLNLSFNDLHYFPTEILCL), 368-390 (KNLQILKLRNNPIKEIPSEIQQL), 392-413 (FLRIFTIAFNLITVLPIGLFSL), 414-436 (SYLEELDVSYNELTFIPNEIQKL), 437-459 (RSLEKLTVDGNELSFFPHGILKL), and 487-510 (LTQIISLFIVQNKLHKFYDKIPVE).

The sequence is that of Leucine-rich repeat-containing protein 63 (LRRC63) from Homo sapiens (Human).